The chain runs to 578 residues: Paraneoplastic antigen Ma6F (578 aa).

Disordered regions lie at residues 106–221 (AQPQ…AGAA) and 441–578 (AAPV…PPGK). Residues 112–129 (AVARGAGEAGAAGEAGSV) show a composition bias toward low complexity. Gly residues predominate over residues 147–159 (GGIGEAGGVGEAG). Over residues 160–173 (AAGEAGAAGEAGAA) the composition is skewed to low complexity. Positions 174–211 (GEAGGAGEAGGAGEAGGAGEEGGTGEEGGAGEAGGAGE) are enriched in gly residues. Residues 449-461 (PAAAQASPAQGDA) are compositionally biased toward low complexity. 2 stretches are compositionally biased toward acidic residues: residues 462–473 (SEADPGAEDADE) and 556–566 (EESENEDEDGA).

The polypeptide is Paraneoplastic antigen Ma6F (Homo sapiens (Human)).